Consider the following 239-residue polypeptide: Small ribosomal subunit protein uS3 (239 aa).

Positions 39–107 (VRQVLRKKMS…SVHINVIEVR (69 aa)) constitute a KH type-2 domain. The tract at residues 217–239 (KQDDISRGDRNADRSSRRSREVR) is disordered.

The protein belongs to the universal ribosomal protein uS3 family. Part of the 30S ribosomal subunit. Forms a tight complex with proteins S10 and S14.

Functionally, binds the lower part of the 30S subunit head. Binds mRNA in the 70S ribosome, positioning it for translation. This chain is Small ribosomal subunit protein uS3, found in Xylella fastidiosa (strain 9a5c).